A 250-amino-acid polypeptide reads, in one-letter code: MVASSTVPSVASIFAPESLLKKTKAQKQSREQIVAAAAEKKSARQKKRELIAKRAEAYEAEYRAAEREQIELARKARAEGNYFVPHEPKLIFVVRIRGINNIPPKARKIMQLLRLLQINNGIFVKFNKAIKEMLQVVEPYVTYGIPNHKTVRELIYKRGFGKVNKQRIPLSDNAIIEAALGKYSILSVEDLIHEIYTVGPNFKQAANFLWPFKLSSPLGGWRERKFKHFIEGGDAGKRDEHINGLVQKML.

This sequence belongs to the universal ribosomal protein uL30 family. As to quaternary structure, component of the large ribosomal subunit (LSU). Mature yeast ribosomes consist of a small (40S) and a large (60S) subunit. The 40S small subunit contains 1 molecule of ribosomal RNA (18S rRNA) and at least 33 different proteins. The large 60S subunit contains 3 rRNA molecules (25S, 5.8S and 5S rRNA) and at least 46 different proteins.

It localises to the cytoplasm. The protein localises to the nucleus. It is found in the nucleolus. In terms of biological role, component of the ribosome, a large ribonucleoprotein complex responsible for the synthesis of proteins in the cell. The small ribosomal subunit (SSU) binds messenger RNAs (mRNAs) and translates the encoded message by selecting cognate aminoacyl-transfer RNA (tRNA) molecules. The large subunit (LSU) contains the ribosomal catalytic site termed the peptidyl transferase center (PTC), which catalyzes the formation of peptide bonds, thereby polymerizing the amino acids delivered by tRNAs into a polypeptide chain. The nascent polypeptides leave the ribosome through a tunnel in the LSU and interact with protein factors that function in enzymatic processing, targeting, and the membrane insertion of nascent chains at the exit of the ribosomal tunnel. In Schizosaccharomyces pombe (strain 972 / ATCC 24843) (Fission yeast), this protein is Large ribosomal subunit protein uL30B (rpl702).